The sequence spans 310 residues: Ribosomal RNA small subunit methyltransferase H (310 aa).

S-adenosyl-L-methionine-binding positions include 35 to 37 (GGH), aspartate 52, phenylalanine 79, aspartate 100, and glutamine 107.

The protein belongs to the methyltransferase superfamily. RsmH family.

Its subcellular location is the cytoplasm. The catalysed reaction is cytidine(1402) in 16S rRNA + S-adenosyl-L-methionine = N(4)-methylcytidine(1402) in 16S rRNA + S-adenosyl-L-homocysteine + H(+). Its function is as follows. Specifically methylates the N4 position of cytidine in position 1402 (C1402) of 16S rRNA. The sequence is that of Ribosomal RNA small subunit methyltransferase H from Anaeromyxobacter dehalogenans (strain 2CP-1 / ATCC BAA-258).